Reading from the N-terminus, the 229-residue chain is Rab-like protein 2A (229 aa).

Residues 28–35, 76–80, and 133–136 contribute to the GTP site; these read GDSAVGKS, DTAGQ, and NKID. The tract at residues 200–229 is disordered; the sequence is NLEQEEEDVPDQEQSGSIETPSEEVASPHS.

It belongs to the small GTPase superfamily. Rab family. As to quaternary structure, interacts with IFT27, IFT81, IFT172, ATP6V1E1, HK1, LDHC, MAPRE1 and HSPA2.

In terms of biological role, plays an essential role in male fertility, sperm intra-flagellar transport, and tail assembly. Binds, in a GTP-regulated manner, to a specific set of effector proteins including key proteins involved in cilia development and function and delivers them into the growing sperm tail. This Pongo abelii (Sumatran orangutan) protein is Rab-like protein 2A (RABL2A).